The chain runs to 338 residues: MTDLKPFLAKAASREPLTREEARSAFDILMSGQATPSQIGGFLMALRVRGETVDEIVGAVASMRSKMLTVEAPADAIDIVGTGGDASGTYNISTLAALIVAGAGVPVAKHGNRALSSKSGAADNLAALGVKLDVGPEIISRCIAEAGVGFMFAQMHHSAMRHVGPSRVELGTRTIFNLLGPLSNPAGVRRQLLGVFSPQWLVPLAEVMRDLGSECVWVVHGDGLDEITTTGITKVAALEDGKIRTFELSPADFGVSPCVLADIKGGDGVANAAALREVLGGAKNAYRDVSLANAAASLVIAGKVETIHDGMTLAAQSLDSGATALALDKLIAVSNDID.

5-phospho-alpha-D-ribose 1-diphosphate contacts are provided by residues G81, 84–85 (GD), T89, 91–94 (NIST), 109–117 (KHGNRALSS), and A121. G81 serves as a coordination point for anthranilate. S93 serves as a coordination point for Mg(2+). N112 lines the anthranilate pocket. An anthranilate-binding site is contributed by R167. Mg(2+) is bound by residues D225 and E226.

The protein belongs to the anthranilate phosphoribosyltransferase family. In terms of assembly, homodimer. Requires Mg(2+) as cofactor.

It catalyses the reaction N-(5-phospho-beta-D-ribosyl)anthranilate + diphosphate = 5-phospho-alpha-D-ribose 1-diphosphate + anthranilate. It functions in the pathway amino-acid biosynthesis; L-tryptophan biosynthesis; L-tryptophan from chorismate: step 2/5. Functionally, catalyzes the transfer of the phosphoribosyl group of 5-phosphorylribose-1-pyrophosphate (PRPP) to anthranilate to yield N-(5'-phosphoribosyl)-anthranilate (PRA). The chain is Anthranilate phosphoribosyltransferase from Rhizobium johnstonii (strain DSM 114642 / LMG 32736 / 3841) (Rhizobium leguminosarum bv. viciae).